The following is a 405-amino-acid chain: uncharacterized protein (405 aa).

Disordered regions lie at residues 1 to 21 (MSKKVNKNASPKNNSDSESKT), 150 to 179 (IKDESDSDSDDEDTKKKKKNTKNKGKQEGP), and 285 to 405 (DDED…KSRS). Residues 7–16 (KNASPKNNSD) are compositionally biased toward polar residues. Composition is skewed to acidic residues over residues 312 to 331 (SDDEDSDNEKEKEKEEDDEE) and 349 to 358 (DDEDDEEEGE). Composition is skewed to basic residues over residues 365 to 374 (SSKKSSKKAS) and 390 to 405 (PKKKSSKAKSPSKSRS).

This is an uncharacterized protein from Acanthamoeba polyphaga (Amoeba).